A 155-amino-acid polypeptide reads, in one-letter code: DNA-directed RNA polymerase II subunit rpb4 (155 aa).

The protein belongs to the eukaryotic RPB4 RNA polymerase subunit family. Component of the RNA polymerase II (Pol II) complex consisting of 12 subunits. RPB4 and RPB7 form a subcomplex that protrudes from the 10-subunit Pol II core complex.

The protein resides in the nucleus. DNA-dependent RNA polymerase catalyzes the transcription of DNA into RNA using the four ribonucleoside triphosphates as substrates. Component of RNA polymerase II which synthesizes mRNA precursors and many functional non-coding RNAs. Pol II is the central component of the basal RNA polymerase II transcription machinery. It is composed of mobile elements that move relative to each other. RPB4 is part of a subcomplex with RPB7 that binds to a pocket formed by RPB1, RPB2 and RPB6 at the base of the clamp element. The RPB4-RPB7 subcomplex seems to lock the clamp via RPB7 in the closed conformation thus preventing double-stranded DNA to enter the active site cleft. The RPB4-RPB7 subcomplex binds single-stranded DNA and RNA. The polypeptide is DNA-directed RNA polymerase II subunit rpb4 (polr2d) (Dictyostelium discoideum (Social amoeba)).